The following is a 181-amino-acid chain: Der GTPase-activating protein YihI (181 aa).

2 disordered regions span residues 1-75 and 145-181; these read MSRK…KKIP and EPEAEEEFEDEAPVRKSRSDDDLLADFEDFDMDDYKG. Residues 32-43 are compositionally biased toward basic residues; sequence RLRKKDKKRKGL. A compositionally biased stretch (acidic residues) spans 146-155; that stretch reads PEAEEEFEDE. The segment covering 156–165 has biased composition (basic and acidic residues); the sequence is APVRKSRSDD. Residues 166-181 are compositionally biased toward acidic residues; it reads DLLADFEDFDMDDYKG.

The protein belongs to the YihI family. In terms of assembly, interacts with Der.

Functionally, a GTPase-activating protein (GAP) that modifies Der/EngA GTPase function. May play a role in ribosome biogenesis. The sequence is that of Der GTPase-activating protein YihI from Vibrio vulnificus (strain YJ016).